Reading from the N-terminus, the 480-residue chain is ATP synthase subunit beta (480 aa).

152 to 159 (GGAGVGKT) serves as a coordination point for ATP.

This sequence belongs to the ATPase alpha/beta chains family. In terms of assembly, F-type ATPases have 2 components, CF(1) - the catalytic core - and CF(0) - the membrane proton channel. CF(1) has five subunits: alpha(3), beta(3), gamma(1), delta(1), epsilon(1). CF(0) has three main subunits: a(1), b(2) and c(9-12). The alpha and beta chains form an alternating ring which encloses part of the gamma chain. CF(1) is attached to CF(0) by a central stalk formed by the gamma and epsilon chains, while a peripheral stalk is formed by the delta and b chains.

Its subcellular location is the cell membrane. The enzyme catalyses ATP + H2O + 4 H(+)(in) = ADP + phosphate + 5 H(+)(out). Its function is as follows. Produces ATP from ADP in the presence of a proton gradient across the membrane. The catalytic sites are hosted primarily by the beta subunits. This is ATP synthase subunit beta from Wolbachia sp. subsp. Brugia malayi (strain TRS).